The following is an 830-amino-acid chain: Histone acetyltransferase KAT2A (830 aa).

The tract at residues 1–94 (MAEPSQAPNP…RKAQVRGLPR (94 aa)) is disordered. At alanine 2 the chain carries N-acetylalanine. 2 stretches are compositionally biased toward pro residues: residues 7–33 (APNP…PAPS) and 41–51 (APTPAPAPAPA). Over residues 58-69 (TGSGGAGVGSGG) the composition is skewed to gly residues. The span at 83–94 (SQRKAQVRGLPR) shows a compositional bias: basic residues. Serine 302 carries the phosphoserine modification. Residues 398-417 (SFSPSMGGGSNSSLSLDSAG) show a composition bias toward low complexity. Residues 398 to 426 (SFSPSMGGGSNSSLSLDSAGTEPMPAGEK) are disordered. Positions 496-649 (VIGNSLTPKA…GATLMECELN (154 aa)) constitute an N-acetyltransferase domain. Lysine 542 carries the N6-acetyllysine modification. The active-site Proton donor/acceptor is glutamate 568. Residues 572-574 (CAV), 579-585 (QVKGYGT), and tyrosine 610 contribute to the acetyl-CoA site. Succinyl-CoA-binding positions include 572 to 574 (CAV), 579 to 585 (QVKGYGT), and tyrosine 610. Lysine 721 participates in a covalent cross-link: Glycyl lysine isopeptide (Lys-Gly) (interchain with G-Cter in SUMO2). One can recognise a Bromo domain in the interval 721-825 (KDPDQLYTTL…KFFYFKLKEG (105 aa)). Residue threonine 728 is modified to Phosphothreonine. Glycyl lysine isopeptide (Lys-Gly) (interchain with G-Cter in SUMO2) cross-links involve residues lysine 752 and lysine 784.

This sequence belongs to the acetyltransferase family. GCN5 subfamily. As to quaternary structure, interacts with EP300, CREBBP and ADA2. Component of the TFTC-HAT complex, at least composed of TAF5L, TAF6L, TAF3, TADA3L, SUPT3H/SPT3, TAF2/TAFII150, TAF4/TAFII135, TAF5/TAFII100, KAT2A/GCN5L2, TAF10 and TRRAP. Component of the STAGA transcription coactivator-HAT complex, at least composed of SUPT3H, KAT2A, SUPT7L, TAF5L, TAF6L, TADA3L, TAD1L, TAF10, TAF12, TRRAP and TAF9. The STAGA core complex is associated with a subcomplex required for histone deubiquitination composed of ATXN7L3, ENY2 and USP22. Component of the ADA2A-containing complex (ATAC), composed of KAT14, KAT2A, TADA2L, TADA3L, ZZ3, MBIP, WDR5, YEATS2, CCDC101 and DR1. In the complex, it probably interacts directly with KAT14, MBIP and WDR5. Interacts with PML. Interacts with CEBPB. Interacts with TACC1, TACC2 and TACC3. Interacts with RELA. Interacts with NFATC2. Interacts with TBX5. Interacts with PLK4. Associates with the 2-oxoglutarate dehydrogenase complex. Interacts with XPC; leading to KAT2A recruitment to promoters and subsequent acetylation of histones. Interacts with ERCC3/XPB; leading to KAT2A recruitment to promoters and subsequent acetylation of histones. Interacts with ISL1. Interactions of ISL1 with MLIP1 or KAT2A may be mutually exclusive. Post-translationally, acetylated at Lys-542, inhibiting the protein acetyltransferase activity. Deacetylation at Lys-542 by SIRT6 promotes phosphorylation at Ser-302 and Thr-728 and subsequent activation of the protein acetyltransferase activity, leading to acetylation and inactivation of PPARGC1A. In terms of tissue distribution, in brain, highly expressed in the hippocampal CA1 region (at protein level). Also expressed in the hippocampal subregions CA3 and the dentate gyrus as well as in the cortex and prefrontal cortex. Expressed at low level in the cerebellum.

Its subcellular location is the nucleus. It localises to the chromosome. The protein resides in the cytoplasm. It is found in the cytoskeleton. The protein localises to the microtubule organizing center. Its subcellular location is the centrosome. It catalyses the reaction L-lysyl-[histone] + acetyl-CoA = N(6)-acetyl-L-lysyl-[histone] + CoA + H(+). The enzyme catalyses L-lysyl-[protein] + acetyl-CoA = N(6)-acetyl-L-lysyl-[protein] + CoA + H(+). The catalysed reaction is succinyl-CoA + L-lysyl-[protein] = N(6)-succinyl-L-lysyl-[protein] + CoA + H(+). It carries out the reaction glutaryl-CoA + L-lysyl-[protein] = N(6)-glutaryl-L-lysyl-[protein] + CoA + H(+). Its function is as follows. Protein lysine acyltransferase that can act as a acetyltransferase, glutaryltransferase, succinyltransferase or malonyltransferase, depending on the context. Acts as a histone lysine succinyltransferase: catalyzes succinylation of histone H3 on 'Lys-79' (H3K79succ), with a maximum frequency around the transcription start sites of genes. Succinylation of histones gives a specific tag for epigenetic transcription activation. Association with the 2-oxoglutarate dehydrogenase complex, which provides succinyl-CoA, is required for histone succinylation. In different complexes, functions either as an acetyltransferase (HAT) or as a succinyltransferase: in the SAGA and ATAC complexes, acts as a histone acetyltransferase. Has significant histone acetyltransferase activity with core histones, but not with nucleosome core particles. Has a a strong preference for acetylation of H3 at 'Lys-9' (H3K9ac). Acetylation of histones gives a specific tag for epigenetic transcription activation. Recruited by the XPC complex at promoters, where it specifically mediates acetylation of histone variant H2A.Z.1/H2A.Z, thereby promoting expression of target genes. Involved in long-term memory consolidation and synaptic plasticity: acts by promoting expression of a hippocampal gene expression network linked to neuroactive receptor signaling. Acts as a positive regulator of T-cell activation: upon TCR stimulation, recruited to the IL2 promoter following interaction with NFATC2 and catalyzes acetylation of histone H3 at 'Lys-9' (H3K9ac), leading to promote IL2 expression. Required for growth and differentiation of craniofacial cartilage and bone by regulating acetylation of histone H3 at 'Lys-9' (H3K9ac). Regulates embryonic stem cell (ESC) pluripotency and differentiation. Also acetylates non-histone proteins, such as CEBPB, MRE11, PPARGC1A, PLK4 and TBX5. Involved in heart and limb development by mediating acetylation of TBX5, acetylation regulating nucleocytoplasmic shuttling of TBX5. Acts as a negative regulator of centrosome amplification by mediating acetylation of PLK4. Acts as a negative regulator of gluconeogenesis by mediating acetylation and subsequent inactivation of PPARGC1A. Also acts as a histone glutaryltransferase: catalyzes glutarylation of histone H4 on 'Lys-91' (H4K91glu), a mark that destabilizes nucleosomes by promoting dissociation of the H2A-H2B dimers from nucleosomes. This Mus musculus (Mouse) protein is Histone acetyltransferase KAT2A.